A 478-amino-acid polypeptide reads, in one-letter code: Probable cytosolic Fe-S cluster assembly factor CPIJ010948 (478 aa).

[4Fe-4S] cluster is bound by residues Cys23, Cys69, Cys72, Cys75, Cys189, Cys245, Cys396, and Cys400.

It belongs to the NARF family.

In terms of biological role, component of the cytosolic iron-sulfur (Fe/S) protein assembly machinery. Required for maturation of extramitochondrial Fe/S proteins. The sequence is that of Probable cytosolic Fe-S cluster assembly factor CPIJ010948 from Culex quinquefasciatus (Southern house mosquito).